Reading from the N-terminus, the 216-residue chain is Ras-related protein RABE1d (216 aa).

22–29 (GDSGVGKS) serves as a coordination point for GTP. An Effector region motif is present at residues 44 to 52 (FITTIGIDF). Residues 70–74 (DTAGQ), 128–131 (NKAD), and 159–160 (SA) each bind GTP. The segment at 196–216 (TKQDTAASSSTAEKSACCSYV) is disordered. Residues 200–216 (TAASSSTAEKSACCSYV) are compositionally biased toward low complexity. S-geranylgeranyl cysteine attachment occurs at residues Cys212 and Cys213.

Belongs to the small GTPase superfamily. Rab family. In terms of assembly, interacts with PI5K2.

Its subcellular location is the golgi apparatus membrane. The protein localises to the cell membrane. In terms of biological role, involved in membrane trafficking from the Golgi to the plasma membrane. In Arabidopsis thaliana (Mouse-ear cress), this protein is Ras-related protein RABE1d (RABE1D).